We begin with the raw amino-acid sequence, 274 residues long: Dermonecrotic toxin SdSicTox-betaIIB1bii (274 aa).

Histidine 5 is an active-site residue. Residues glutamate 25 and aspartate 27 each contribute to the Mg(2+) site. Catalysis depends on histidine 41, which acts as the Nucleophile. Cystine bridges form between cysteine 45–cysteine 51 and cysteine 47–cysteine 190. Position 85 (aspartate 85) interacts with Mg(2+).

The protein belongs to the arthropod phospholipase D family. Class II subfamily. Requires Mg(2+) as cofactor. As to expression, expressed by the venom gland.

It is found in the secreted. It carries out the reaction an N-(acyl)-sphingosylphosphocholine = an N-(acyl)-sphingosyl-1,3-cyclic phosphate + choline. It catalyses the reaction an N-(acyl)-sphingosylphosphoethanolamine = an N-(acyl)-sphingosyl-1,3-cyclic phosphate + ethanolamine. The catalysed reaction is a 1-acyl-sn-glycero-3-phosphocholine = a 1-acyl-sn-glycero-2,3-cyclic phosphate + choline. The enzyme catalyses a 1-acyl-sn-glycero-3-phosphoethanolamine = a 1-acyl-sn-glycero-2,3-cyclic phosphate + ethanolamine. Functionally, dermonecrotic toxins cleave the phosphodiester linkage between the phosphate and headgroup of certain phospholipids (sphingolipid and lysolipid substrates), forming an alcohol (often choline) and a cyclic phosphate. This toxin acts on sphingomyelin (SM). It may also act on ceramide phosphoethanolamine (CPE), lysophosphatidylcholine (LPC) and lysophosphatidylethanolamine (LPE), but not on lysophosphatidylserine (LPS), and lysophosphatidylglycerol (LPG). It acts by transphosphatidylation, releasing exclusively cyclic phosphate products as second products. Induces dermonecrosis, hemolysis, increased vascular permeability, edema, inflammatory response, and platelet aggregation. In Sicarius cf. damarensis (strain GJB-2008) (Six-eyed sand spider), this protein is Dermonecrotic toxin SdSicTox-betaIIB1bii.